The chain runs to 1004 residues: MAKQEQAPDRANDVFALTSFLYGGNADYIEELYAKYEDDPNSVDPQWRDFFAKLGDNADDVKKNAEGPSWTRKNWPIAANGELVSALDGNWAEVEKHVTDKLKGKAAKGEAKGAAGTPLTAEEITQAARDSVRAIMMIRAYRMRGHLHANLDPLGLAEKPNDYNELEPENYGFTPADYNRKIFIDNVLGLEYATVPEMLDILKRTYCGAIGVEFMHISDPAEKAWIQERIEGPDKKVAFTPEGKKAILSKLIEAEGFEQFIDVKYKGTKRFGLDGGESLIPALEQIVKRGGQMGLKEVVLGMAHRGRLNVLSQVMGKPHRAIFHEFKGGSYTPDDVEGSGDVKYHLGASSDREFDGNKVHLSLTANPSHLEIVNPVVMGKARAKQDLLVGRTRDDMVPLSERAKVLPLLLHGDAAFAGQGVVAECLGLSGLKGHRVAGTLHFIINNQIGFTTNPAFSRSSPYPSDVAKMIEAPIFHVNGDDPEAVVFAAKVATEFRMTFHKPVVIDMFCYRRFGHNEGDEPSFTQPLMYKAIRAHKTTVQLYGEKLIAEGLVTQDDIDRMKADWRQKLEGEFEAGQSYKPNKADWLDGAWAGLRTADNADEQRRGKTAVPVKTLKEIGKKLVEVPKDFHVHRTIQRFLDNRAKMMETGEGIDWATAESLAFGSLAVEGHPIRLSGQDVERGTFSQRHTVLYDQENQNRYIPLNNLQKGQAIYEAINSMLSEEAVLGYEYGYSLSDPRALVLWEAQFGDFANGAQVVFDQFISSGERKWLRMSGLVCLLPHGFEGQGPEHSSARLERYLQLCAEDNMQVANVTTPANYFHILRRQMKRDFRKPLIMMTPKSLLRHKRAISTLAELSGESSFHRLLWDDAQYNKDEGIKLQKDAKIRRVVLCSGKVYYDLYEEREKRGIDDVYLLRVEQLYPFPAKALINELSRFRHAEMVWCQEEPKNMGAWSFIDPYLEWVLAHIDAKHQRVRYAGRPAAASPATGLMSKHLAQLAAFLEDALG.

Belongs to the alpha-ketoglutarate dehydrogenase family. Homodimer. Part of the 2-oxoglutarate dehydrogenase (OGDH) complex composed of E1 (2-oxoglutarate dehydrogenase), E2 (dihydrolipoamide succinyltransferase) and E3 (dihydrolipoamide dehydrogenase); the complex contains multiple copies of the three enzymatic components (E1, E2 and E3). Requires thiamine diphosphate as cofactor.

It catalyses the reaction N(6)-[(R)-lipoyl]-L-lysyl-[protein] + 2-oxoglutarate + H(+) = N(6)-[(R)-S(8)-succinyldihydrolipoyl]-L-lysyl-[protein] + CO2. E1 component of the 2-oxoglutarate dehydrogenase (OGDH) complex which catalyzes the decarboxylation of 2-oxoglutarate, the first step in the conversion of 2-oxoglutarate to succinyl-CoA and CO(2). The protein is 2-oxoglutarate dehydrogenase E1 component of Brucella suis biovar 1 (strain 1330).